A 308-amino-acid polypeptide reads, in one-letter code: D-alanine--D-alanine ligase (308 aa).

Residues 102–302 (KHVAKAAGIP…FGEFLRWMVE (201 aa)) form the ATP-grasp domain. 128-183 (PMKPPYVVKPVREGSSFGVVIVKEDQSHPPQVITSSDWRYGDRIMVERYVAGREFT) contributes to the ATP binding site. Aspartate 252, glutamate 269, and asparagine 271 together coordinate Mg(2+).

Belongs to the D-alanine--D-alanine ligase family. It depends on Mg(2+) as a cofactor. Mn(2+) is required as a cofactor.

It localises to the cytoplasm. It carries out the reaction 2 D-alanine + ATP = D-alanyl-D-alanine + ADP + phosphate + H(+). Its pathway is cell wall biogenesis; peptidoglycan biosynthesis. Functionally, cell wall formation. This is D-alanine--D-alanine ligase from Sinorhizobium medicae (strain WSM419) (Ensifer medicae).